Here is a 358-residue protein sequence, read N- to C-terminus: Protein-glutamate methylesterase/protein-glutamine glutaminase 3 (358 aa).

The 117-residue stretch at 2-118 (KILVVDDSAL…CGRLQEVAPL (117 aa)) folds into the Response regulatory domain. Residue aspartate 52 is modified to 4-aspartylphosphate. A CheB-type methylesterase domain is found at 155-325 (NNEDHQLAIM…VPSMPEALLK (171 aa)). Residues serine 167, histidine 194, and aspartate 291 contribute to the active site.

Belongs to the CheB family. In terms of processing, phosphorylated by CheA. Phosphorylation of the N-terminal regulatory domain activates the methylesterase activity.

It is found in the cytoplasm. The catalysed reaction is [protein]-L-glutamate 5-O-methyl ester + H2O = L-glutamyl-[protein] + methanol + H(+). It carries out the reaction L-glutaminyl-[protein] + H2O = L-glutamyl-[protein] + NH4(+). Involved in chemotaxis. Part of a chemotaxis signal transduction system that modulates chemotaxis in response to various stimuli. Catalyzes the demethylation of specific methylglutamate residues introduced into the chemoreceptors (methyl-accepting chemotaxis proteins or MCP) by CheR. Also mediates the irreversible deamidation of specific glutamine residues to glutamic acid. The sequence is that of Protein-glutamate methylesterase/protein-glutamine glutaminase 3 from Vibrio cholerae serotype O1 (strain ATCC 39315 / El Tor Inaba N16961).